Reading from the N-terminus, the 901-residue chain is HTH-type transcriptional regulator MalT (901 aa).

Residue 39 to 46 (SPAGYGKT) coordinates ATP. The region spanning 829–894 (ELIRTSPLTQ…DAVQHAQQLL (66 aa)) is the HTH luxR-type domain. Positions 853-872 (NEQIAGELAVAATTIKTHIR) form a DNA-binding region, H-T-H motif.

It belongs to the MalT family. In terms of assembly, monomer in solution. Oligomerizes to an active state in the presence of the positive effectors ATP and maltotriose.

Activated by ATP and maltotriose, which are both required for DNA binding. In terms of biological role, positively regulates the transcription of the maltose regulon whose gene products are responsible for uptake and catabolism of malto-oligosaccharides. Specifically binds to the promoter region of its target genes, recognizing a short DNA motif called the MalT box. In Salmonella agona (strain SL483), this protein is HTH-type transcriptional regulator MalT.